A 213-amino-acid chain; its full sequence is Holliday junction resolvase RecU (213 aa).

Mg(2+)-binding residues include T99, D101, E114, and Q133.

This sequence belongs to the RecU family. Requires Mg(2+) as cofactor.

The protein localises to the cytoplasm. The enzyme catalyses Endonucleolytic cleavage at a junction such as a reciprocal single-stranded crossover between two homologous DNA duplexes (Holliday junction).. Endonuclease that resolves Holliday junction intermediates in genetic recombination. Cleaves mobile four-strand junctions by introducing symmetrical nicks in paired strands. Promotes annealing of linear ssDNA with homologous dsDNA. Required for DNA repair, homologous recombination and chromosome segregation. The chain is Holliday junction resolvase RecU from Lactococcus lactis subsp. lactis (strain IL1403) (Streptococcus lactis).